The following is a 103-amino-acid chain: Small ribosomal subunit protein uS10 (103 aa).

Belongs to the universal ribosomal protein uS10 family. As to quaternary structure, part of the 30S ribosomal subunit.

Its function is as follows. Involved in the binding of tRNA to the ribosomes. In Chlorobaculum parvum (strain DSM 263 / NCIMB 8327) (Chlorobium vibrioforme subsp. thiosulfatophilum), this protein is Small ribosomal subunit protein uS10.